The following is a 159-amino-acid chain: 6,7-dimethyl-8-ribityllumazine synthase (159 aa).

5-amino-6-(D-ribitylamino)uracil contacts are provided by residues Trp-26, 57–59 (ALE), and 79–81 (CVI). 84–85 (GT) contributes to the (2S)-2-hydroxy-3-oxobutyl phosphate binding site. Residue His-87 is the Proton donor of the active site. 5-amino-6-(D-ribitylamino)uracil is bound at residue Asn-112. Residue Arg-126 participates in (2S)-2-hydroxy-3-oxobutyl phosphate binding.

The protein belongs to the DMRL synthase family.

The catalysed reaction is (2S)-2-hydroxy-3-oxobutyl phosphate + 5-amino-6-(D-ribitylamino)uracil = 6,7-dimethyl-8-(1-D-ribityl)lumazine + phosphate + 2 H2O + H(+). The protein operates within cofactor biosynthesis; riboflavin biosynthesis; riboflavin from 2-hydroxy-3-oxobutyl phosphate and 5-amino-6-(D-ribitylamino)uracil: step 1/2. In terms of biological role, catalyzes the formation of 6,7-dimethyl-8-ribityllumazine by condensation of 5-amino-6-(D-ribitylamino)uracil with 3,4-dihydroxy-2-butanone 4-phosphate. This is the penultimate step in the biosynthesis of riboflavin. This chain is 6,7-dimethyl-8-ribityllumazine synthase, found in Corynebacterium efficiens (strain DSM 44549 / YS-314 / AJ 12310 / JCM 11189 / NBRC 100395).